A 355-amino-acid chain; its full sequence is S-methyl-5'-thioadenosine phosphorylase (355 aa).

Phosphate is bound by residues Thr45, 91 to 92 (RH), and 124 to 125 (SA). Residue Met226 participates in substrate binding. Ser227 is a binding site for phosphate. 250–252 (DYD) lines the substrate pocket.

This sequence belongs to the PNP/MTAP phosphorylase family. MTAP subfamily. Homotrimer.

It localises to the cytoplasm. The protein resides in the nucleus. The enzyme catalyses S-methyl-5'-thioadenosine + phosphate = 5-(methylsulfanyl)-alpha-D-ribose 1-phosphate + adenine. Its pathway is amino-acid biosynthesis; L-methionine biosynthesis via salvage pathway; S-methyl-5-thio-alpha-D-ribose 1-phosphate from S-methyl-5'-thioadenosine (phosphorylase route): step 1/1. Functionally, catalyzes the reversible phosphorylation of S-methyl-5'-thioadenosine (MTA) to adenine and 5-methylthioribose-1-phosphate. Involved in the breakdown of MTA, a major by-product of polyamine biosynthesis. Responsible for the first step in the methionine salvage pathway after MTA has been generated from S-adenosylmethionine. Has broad substrate specificity with 6-aminopurine nucleosides as preferred substrates. In Emericella nidulans (strain FGSC A4 / ATCC 38163 / CBS 112.46 / NRRL 194 / M139) (Aspergillus nidulans), this protein is S-methyl-5'-thioadenosine phosphorylase.